The sequence spans 296 residues: UDP-N-acetylenolpyruvoylglucosamine reductase (296 aa).

Residues 19 to 203 (KVGGFAEYFS…LETTQKNLKK (185 aa)) enclose the FAD-binding PCMH-type domain. Arg166 is an active-site residue. The active-site Proton donor is Ser217. Residue Glu287 is part of the active site.

Belongs to the MurB family. The cofactor is FAD.

It localises to the cytoplasm. It carries out the reaction UDP-N-acetyl-alpha-D-muramate + NADP(+) = UDP-N-acetyl-3-O-(1-carboxyvinyl)-alpha-D-glucosamine + NADPH + H(+). It participates in cell wall biogenesis; peptidoglycan biosynthesis. In terms of biological role, cell wall formation. The sequence is that of UDP-N-acetylenolpyruvoylglucosamine reductase from Prochlorococcus marinus subsp. pastoris (strain CCMP1986 / NIES-2087 / MED4).